Here is a 130-residue protein sequence, read N- to C-terminus: Putative ankyrin repeat protein R886 (130 aa).

ANK repeat units lie at residues 21–50 (NYDRTIINSSEYGNFEIVKYLIDNGADITA), 54–83 (YGFTPLDLSSKNGHYEIVKLLVECRASIIK), and 85–113 (DNLTLILASENGHIKIVKLLVENGADIRY).

The polypeptide is Putative ankyrin repeat protein R886 (Acanthamoeba polyphaga (Amoeba)).